Consider the following 510-residue polypeptide: Probable cytochrome P450 4d20 (510 aa).

Heme is bound at residue cysteine 455.

It belongs to the cytochrome P450 family. Heme serves as cofactor.

The protein resides in the endoplasmic reticulum membrane. It localises to the microsome membrane. In terms of biological role, may be involved in the metabolism of insect hormones and in the breakdown of synthetic insecticides. This Drosophila melanogaster (Fruit fly) protein is Probable cytochrome P450 4d20 (Cyp4d20).